The primary structure comprises 171 residues: S-ribosylhomocysteine lyase (171 aa).

Histidine 54, histidine 58, and cysteine 128 together coordinate Fe cation.

This sequence belongs to the LuxS family. In terms of assembly, homodimer. It depends on Fe cation as a cofactor.

It catalyses the reaction S-(5-deoxy-D-ribos-5-yl)-L-homocysteine = (S)-4,5-dihydroxypentane-2,3-dione + L-homocysteine. Involved in the synthesis of autoinducer 2 (AI-2) which is secreted by bacteria and is used to communicate both the cell density and the metabolic potential of the environment. The regulation of gene expression in response to changes in cell density is called quorum sensing. Catalyzes the transformation of S-ribosylhomocysteine (RHC) to homocysteine (HC) and 4,5-dihydroxy-2,3-pentadione (DPD). The polypeptide is S-ribosylhomocysteine lyase (Escherichia coli O81 (strain ED1a)).